We begin with the raw amino-acid sequence, 580 residues long: G1/S-specific cyclin CLN3 (580 aa).

Over residues 454–469 the composition is skewed to low complexity; that stretch reads FTPTSSSSSPSPFNSP. Disordered stretches follow at residues 454-498 and 546-580; these read FTPT…QNSF and MATA…KKTR. 2 stretches are compositionally biased toward polar residues: residues 470–480 and 563–580; these read YKTSSSMTTPD and TSSV…KKTR.

This sequence belongs to the cyclin family.

In terms of biological role, essential for the control of the cell cycle at the G1/S (start) transition. CLN3 may be an upstream activator of the G1 cyclins which directly catalyze start. In Saccharomyces cerevisiae (strain ATCC 204508 / S288c) (Baker's yeast), this protein is G1/S-specific cyclin CLN3 (CLN3).